A 207-amino-acid polypeptide reads, in one-letter code: Superoxide dismutase [Mn] (207 aa).

His-28, His-76, Asp-160, and His-164 together coordinate Mn(2+).

This sequence belongs to the iron/manganese superoxide dismutase family. As to quaternary structure, homotetramer. Requires Mn(2+) as cofactor.

The protein localises to the secreted. The catalysed reaction is 2 superoxide + 2 H(+) = H2O2 + O2. Destroys superoxide anion radicals which are normally produced within the cells and which are toxic to biological systems. The protein is Superoxide dismutase [Mn] (sodA) of Mycolicibacterium smegmatis (Mycobacterium smegmatis).